We begin with the raw amino-acid sequence, 444 residues long: Homogentisate 1,2-dioxygenase (444 aa).

The Proton acceptor role is filled by His298. Fe cation is bound by residues His341 and Glu347. The homogentisate site is built by Tyr356 and His377. Residue His377 participates in Fe cation binding.

This sequence belongs to the homogentisate dioxygenase family. In terms of assembly, hexamer; dimer of trimers. Fe cation serves as cofactor.

The catalysed reaction is homogentisate + O2 = 4-maleylacetoacetate + H(+). It functions in the pathway amino-acid degradation; L-phenylalanine degradation; acetoacetate and fumarate from L-phenylalanine: step 4/6. Functionally, involved in the catabolism of homogentisate (2,5-dihydroxyphenylacetate or 2,5-OH-PhAc), a central intermediate in the degradation of phenylalanine and tyrosine. Catalyzes the oxidative ring cleavage of the aromatic ring of homogentisate to yield maleylacetoacetate. This Burkholderia cenocepacia (strain ATCC BAA-245 / DSM 16553 / LMG 16656 / NCTC 13227 / J2315 / CF5610) (Burkholderia cepacia (strain J2315)) protein is Homogentisate 1,2-dioxygenase.